A 71-amino-acid chain; its full sequence is Cytochrome c oxidase subunit 7, mitochondrial (71 aa).

Over 1-35 (MPGLVNAPNHVPEKQRYYQQAFKNHTRLWKIGPRS) the chain is Mitochondrial matrix. A helical transmembrane segment spans residues 36–58 (GIIMTTFNIAMWGTFGASMYAMS). Topologically, residues 59–71 (RKVLGYNTWFSED) are mitochondrial intermembrane.

Belongs to the cytochrome c oxidase VIIa family. In terms of assembly, component of the cytochrome c oxidase (complex IV, CIV), a multisubunit enzyme composed of 11 subunits. The complex is composed of a catalytic core of 3 subunits Cox1, Cox2 and Cox3, encoded in the mitochondrial DNA, and 8 supernumerary subunits Cox4, Cox5a/Cox5, Cox6, Cox7, Cox8, Cox7a/Cox9, Cox6b/Cox12 and Cox6a/Cox13, which are encoded in the nuclear genome. The complex exists as a monomer or a dimer and forms respiratory supercomplexes (SCs) in the inner mitochondrial membrane with NADH-ubiquinone oxidoreductase (complex I, CI) and ubiquinol-cytochrome c oxidoreductase (cytochrome b-c1 complex, complex III, CIII), resulting in various different assemblies (supercomplexes I(1)IV(1), I(1)III(3)IV(2), III(2)IV(1) and III(2)IV(2) as well as larger supercomplexes of compositions like I(1)III(2)IV(5-6)).

It is found in the mitochondrion inner membrane. It participates in energy metabolism; oxidative phosphorylation. In terms of biological role, component of the cytochrome c oxidase, the last enzyme in the mitochondrial electron transport chain which drives oxidative phosphorylation. The respiratory chain contains 3 multisubunit complexes succinate dehydrogenase (complex II, CII), ubiquinol-cytochrome c oxidoreductase (cytochrome b-c1 complex, complex III, CIII) and cytochrome c oxidase (complex IV, CIV), that cooperate to transfer electrons derived from NADH and succinate to molecular oxygen, creating an electrochemical gradient over the inner membrane that drives transmembrane transport and the ATP synthase. Cytochrome c oxidase is the component of the respiratory chain that catalyzes the reduction of oxygen to water. Electrons originating from reduced cytochrome c in the intermembrane space (IMS) are transferred via the dinuclear copper A center (CU(A)) of Cox2 and heme A of Cox1 to the active site in Cox1, a binuclear center (BNC) formed by heme A3 and copper B (CU(B)). The BNC reduces molecular oxygen to 2 water molecules using 4 electrons from cytochrome c in the IMS and 4 protons from the mitochondrial matrix. The polypeptide is Cytochrome c oxidase subunit 7, mitochondrial (Neurospora crassa (strain ATCC 24698 / 74-OR23-1A / CBS 708.71 / DSM 1257 / FGSC 987)).